We begin with the raw amino-acid sequence, 232 residues long: Y-linked testis-specific protein 1 (232 aa).

This sequence belongs to the SPIN/STSY family. As to expression, expressed in testis (at protein level).

This is Y-linked testis-specific protein 1 (Ssty1) from Mus musculus (Mouse).